Consider the following 461-residue polypeptide: L-seryl-tRNA(Sec) selenium transferase (461 aa).

Residue lysine 294 is modified to N6-(pyridoxal phosphate)lysine.

This sequence belongs to the SelA family. Requires pyridoxal 5'-phosphate as cofactor.

It localises to the cytoplasm. The catalysed reaction is L-seryl-tRNA(Sec) + selenophosphate + H(+) = L-selenocysteinyl-tRNA(Sec) + phosphate. The protein operates within aminoacyl-tRNA biosynthesis; selenocysteinyl-tRNA(Sec) biosynthesis; selenocysteinyl-tRNA(Sec) from L-seryl-tRNA(Sec) (bacterial route): step 1/1. Its function is as follows. Converts seryl-tRNA(Sec) to selenocysteinyl-tRNA(Sec) required for selenoprotein biosynthesis. In Actinobacillus pleuropneumoniae serotype 5b (strain L20), this protein is L-seryl-tRNA(Sec) selenium transferase.